The chain runs to 141 residues: Large ribosomal subunit protein uL11 (141 aa).

Belongs to the universal ribosomal protein uL11 family. Part of the ribosomal stalk of the 50S ribosomal subunit. Interacts with L10 and the large rRNA to form the base of the stalk. L10 forms an elongated spine to which L12 dimers bind in a sequential fashion forming a multimeric L10(L12)X complex. In terms of processing, one or more lysine residues are methylated.

Functionally, forms part of the ribosomal stalk which helps the ribosome interact with GTP-bound translation factors. In Syntrophus aciditrophicus (strain SB), this protein is Large ribosomal subunit protein uL11.